A 217-amino-acid polypeptide reads, in one-letter code: Somatotropin (217 aa).

The first 26 residues, 1–26 (MMAAGPRTSLLLAFALLCLPWTQVVG), serve as a signal peptide directing secretion. Zn(2+) is bound at residue H46. The cysteines at positions 79 and 190 are disulfide-linked. S132 carries the phosphoserine modification. Zn(2+) is bound at residue E199. A disulfide bridge connects residues C207 and C215.

The protein belongs to the somatotropin/prolactin family.

The protein localises to the secreted. Its function is as follows. Plays an important role in growth control. Its major role in stimulating body growth is to stimulate the liver and other tissues to secrete IGF1. It stimulates both the differentiation and proliferation of myoblasts. It also stimulates amino acid uptake and protein synthesis in muscle and other tissues. The chain is Somatotropin (GH1) from Bubalus bubalis (Domestic water buffalo).